The following is a 342-amino-acid chain: Phosphoribosylformylglycinamidine cyclo-ligase (342 aa).

It belongs to the AIR synthase family.

It localises to the cytoplasm. The enzyme catalyses 2-formamido-N(1)-(5-O-phospho-beta-D-ribosyl)acetamidine + ATP = 5-amino-1-(5-phospho-beta-D-ribosyl)imidazole + ADP + phosphate + H(+). The protein operates within purine metabolism; IMP biosynthesis via de novo pathway; 5-amino-1-(5-phospho-D-ribosyl)imidazole from N(2)-formyl-N(1)-(5-phospho-D-ribosyl)glycinamide: step 2/2. The chain is Phosphoribosylformylglycinamidine cyclo-ligase from Staphylococcus aureus (strain Mu3 / ATCC 700698).